The chain runs to 382 residues: Pyrimidine monooxygenase RutA (382 aa).

FMN is bound by residues 68–69 (IK), asparagine 134, glutamate 143, 159–160 (RY), and serine 209.

It belongs to the NtaA/SnaA/DszA monooxygenase family. RutA subfamily.

It catalyses the reaction uracil + FMNH2 + NADH + O2 = (Z)-3-ureidoacrylate + FMN + NAD(+) + H2O + H(+). The catalysed reaction is thymine + FMNH2 + NADH + O2 = (Z)-2-methylureidoacrylate + FMN + NAD(+) + H2O + H(+). Its function is as follows. Catalyzes the pyrimidine ring opening between N-3 and C-4 by an unusual flavin hydroperoxide-catalyzed mechanism, adding oxygen atoms in the process to yield ureidoacrylate peracid, that immediately reacts with FMN forming ureidoacrylate and FMN-N(5)-oxide. The FMN-N(5)-oxide reacts spontaneously with NADH to produce FMN. Requires the flavin reductase RutF to regenerate FMN in vivo. This chain is Pyrimidine monooxygenase RutA, found in Escherichia coli O81 (strain ED1a).